The following is a 192-amino-acid chain: Fe/S biogenesis protein NfuA (192 aa).

Residues Cys-149 and Cys-152 each contribute to the [4Fe-4S] cluster site.

It belongs to the NfuA family. In terms of assembly, homodimer. It depends on [4Fe-4S] cluster as a cofactor.

Functionally, involved in iron-sulfur cluster biogenesis. Binds a 4Fe-4S cluster, can transfer this cluster to apoproteins, and thereby intervenes in the maturation of Fe/S proteins. Could also act as a scaffold/chaperone for damaged Fe/S proteins. This Proteus mirabilis (strain HI4320) protein is Fe/S biogenesis protein NfuA.